A 458-amino-acid chain; its full sequence is D-inositol 3-phosphate glycosyltransferase (458 aa).

Residues 1-29 are disordered; the sequence is MRADRPGHRSRGINPGPGMFTLVGPDERD. Residue His-47 coordinates 1D-myo-inositol 3-phosphate. UDP-N-acetyl-alpha-D-glucosamine-binding positions include 53-54 and Gly-61; that span reads QP. 1D-myo-inositol 3-phosphate is bound by residues 58-63, Lys-116, Tyr-149, Thr-173, and Arg-193; that span reads DAGGMN. The UDP-N-acetyl-alpha-D-glucosamine site is built by Arg-267, Lys-272, and Val-339. Ala-351 is a binding site for Mg(2+). Residues Glu-361 and Glu-369 each contribute to the UDP-N-acetyl-alpha-D-glucosamine site. Thr-375 lines the Mg(2+) pocket.

Belongs to the glycosyltransferase group 1 family. MshA subfamily. In terms of assembly, homodimer.

It catalyses the reaction 1D-myo-inositol 3-phosphate + UDP-N-acetyl-alpha-D-glucosamine = 1D-myo-inositol 2-acetamido-2-deoxy-alpha-D-glucopyranoside 3-phosphate + UDP + H(+). Its function is as follows. Catalyzes the transfer of a N-acetyl-glucosamine moiety to 1D-myo-inositol 3-phosphate to produce 1D-myo-inositol 2-acetamido-2-deoxy-glucopyranoside 3-phosphate in the mycothiol biosynthesis pathway. The chain is D-inositol 3-phosphate glycosyltransferase from Nocardioides sp. (strain ATCC BAA-499 / JS614).